We begin with the raw amino-acid sequence, 481 residues long: 3-isopropylmalate dehydratase large subunit (481 aa).

Residues C363, C423, and C426 each contribute to the [4Fe-4S] cluster site. The segment at 432–459 is disordered; sequence DQLKPGERSASTSNRNFEGRQGPGGRTH.

It belongs to the aconitase/IPM isomerase family. LeuC type 1 subfamily. As to quaternary structure, heterodimer of LeuC and LeuD. It depends on [4Fe-4S] cluster as a cofactor.

It carries out the reaction (2R,3S)-3-isopropylmalate = (2S)-2-isopropylmalate. It functions in the pathway amino-acid biosynthesis; L-leucine biosynthesis; L-leucine from 3-methyl-2-oxobutanoate: step 2/4. Catalyzes the isomerization between 2-isopropylmalate and 3-isopropylmalate, via the formation of 2-isopropylmaleate. This is 3-isopropylmalate dehydratase large subunit from Corynebacterium glutamicum (strain ATCC 13032 / DSM 20300 / JCM 1318 / BCRC 11384 / CCUG 27702 / LMG 3730 / NBRC 12168 / NCIMB 10025 / NRRL B-2784 / 534).